The sequence spans 206 residues: Guanylate kinase (206 aa).

A Guanylate kinase-like domain is found at 6–184 (GTLYIISAPS…ALGDLKAIFR (179 aa)). Residue 13 to 20 (APSGAGKS) participates in ATP binding.

This sequence belongs to the guanylate kinase family.

It is found in the cytoplasm. It carries out the reaction GMP + ATP = GDP + ADP. Its function is as follows. Essential for recycling GMP and indirectly, cGMP. The chain is Guanylate kinase from Pseudomonas fluorescens (strain ATCC BAA-477 / NRRL B-23932 / Pf-5).